A 287-amino-acid polypeptide reads, in one-letter code: MAEITAALVKELRERTGQGMMECKKALVAAGGDIEKAIDDMRASGAIKAAKKAGNIAAEGSIAVRVEGGRGVIIEVNSQTDFLALQDDFKAFVKESIDEAFEKNLTEAAPLIASRESAREALVAKCGENVNIRRLTAVSGETVGAYLHGHRIGVLVVLKGGNDELAKHVAMHVAASNPAVVSPDQVSEELVAKEKEIFLQLNAEKIAGKPENIVENMVKGRIAKFLAEASLVEQAFIMDPEVKVGDLVKKAGAEVVSFVRYEVGEGIEKAETDFAAEVAAQVAASKQ.

An involved in Mg(2+) ion dislocation from EF-Tu region spans residues 80-83; that stretch reads TDFL.

The protein belongs to the EF-Ts family.

The protein resides in the cytoplasm. Associates with the EF-Tu.GDP complex and induces the exchange of GDP to GTP. It remains bound to the aminoacyl-tRNA.EF-Tu.GTP complex up to the GTP hydrolysis stage on the ribosome. This chain is Elongation factor Ts, found in Ectopseudomonas mendocina (strain ymp) (Pseudomonas mendocina).